Here is a 166-residue protein sequence, read N- to C-terminus: Phosphopantetheine adenylyltransferase (166 aa).

S11 contributes to the substrate binding site. ATP is bound by residues 11 to 12 (SF) and H19. Positions 43, 76, and 90 each coordinate substrate. ATP contacts are provided by residues 91-93 (GLR), E101, and 126-132 (LQPISSS).

It belongs to the bacterial CoaD family. As to quaternary structure, homohexamer. Mg(2+) is required as a cofactor.

Its subcellular location is the cytoplasm. It catalyses the reaction (R)-4'-phosphopantetheine + ATP + H(+) = 3'-dephospho-CoA + diphosphate. Its pathway is cofactor biosynthesis; coenzyme A biosynthesis; CoA from (R)-pantothenate: step 4/5. Its function is as follows. Reversibly transfers an adenylyl group from ATP to 4'-phosphopantetheine, yielding dephospho-CoA (dPCoA) and pyrophosphate. The polypeptide is Phosphopantetheine adenylyltransferase (Streptococcus equi subsp. zooepidemicus (strain H70)).